A 508-amino-acid polypeptide reads, in one-letter code: Glycerol kinase (508 aa).

T14 provides a ligand contact to ADP. The ATP site is built by T14, T15, and S16. T14 provides a ligand contact to sn-glycerol 3-phosphate. Residue R18 participates in ADP binding. Positions 84, 85, 136, and 245 each coordinate sn-glycerol 3-phosphate. R84, E85, Y136, D245, and Q246 together coordinate glycerol. The ADP site is built by T267 and G314. ATP contacts are provided by T267, G314, Q318, and G415. Residues G415 and N419 each contribute to the ADP site.

The protein belongs to the FGGY kinase family.

It catalyses the reaction glycerol + ATP = sn-glycerol 3-phosphate + ADP + H(+). Its pathway is polyol metabolism; glycerol degradation via glycerol kinase pathway; sn-glycerol 3-phosphate from glycerol: step 1/1. With respect to regulation, inhibited by fructose 1,6-bisphosphate (FBP). In terms of biological role, key enzyme in the regulation of glycerol uptake and metabolism. Catalyzes the phosphorylation of glycerol to yield sn-glycerol 3-phosphate. The protein is Glycerol kinase of Bordetella parapertussis (strain 12822 / ATCC BAA-587 / NCTC 13253).